A 230-amino-acid polypeptide reads, in one-letter code: Large ribosomal subunit protein uL1c (230 aa).

Belongs to the universal ribosomal protein uL1 family. Part of the 50S ribosomal subunit.

It is found in the plastid. It localises to the chloroplast. Its function is as follows. Binds directly to 23S rRNA. Might be involved in E site tRNA release (Potential). This Phaeodactylum tricornutum (strain CCAP 1055/1) protein is Large ribosomal subunit protein uL1c (rpl1).